The primary structure comprises 216 residues: Thymidylate kinase (216 aa).

Residue 10 to 17 coordinates ATP; that stretch reads GIDGCGKT.

This sequence belongs to the thymidylate kinase family.

It catalyses the reaction dTMP + ATP = dTDP + ADP. Functionally, phosphorylation of dTMP to form dTDP in both de novo and salvage pathways of dTTP synthesis. The sequence is that of Thymidylate kinase from Prochlorococcus marinus (strain MIT 9303).